The sequence spans 436 residues: MSQALPLVTRQGDRIAIVSGLRTPFARQATAYHGVPAVDLGKMVVGELLARSEIPPEVIEQLVFGQVVQMPEAPNIAREIVLGTGMSVHTDAYSVSRACATSFQAVANVAESLMAGTIRAGIAGGADSSSVLPIGVSKKLARTLVDANKARTAGQRLKLFSRLRLRDLLPVPPAVAEYSTGLRMGDTAEQMAKTHGITREQQDALAHRSHQLAAQAWAEGKLREEVMTAYTPPYREPLSEDNNIRKTSSLADYAKLRPAFDRKHGTVTAANSTPLTDGAAAVILMTESRARELGLTPLGYLRSYAFTAVDVWQDMLLGPAWSTPLALERAGLTMADLTLIDMHEAFASQTLTNLKLMASDRFAREVLGRSQATGEVDESKFNVLGGSIAYGHPFAATGARMITQTLNELRRRGGGFGLVTACAAGGLGAAMVLEAE.

Cys99 serves as the catalytic Acyl-thioester intermediate. Residues His392 and Cys422 each act as proton acceptor in the active site.

It belongs to the thiolase-like superfamily. Thiolase family. Heterotetramer of two alpha chains (FadJ) and two beta chains (FadI).

The protein resides in the cytoplasm. The catalysed reaction is an acyl-CoA + acetyl-CoA = a 3-oxoacyl-CoA + CoA. Its pathway is lipid metabolism; fatty acid beta-oxidation. Its function is as follows. Catalyzes the final step of fatty acid oxidation in which acetyl-CoA is released and the CoA ester of a fatty acid two carbons shorter is formed. This is 3-ketoacyl-CoA thiolase from Cronobacter sakazakii (strain ATCC BAA-894) (Enterobacter sakazakii).